The primary structure comprises 308 residues: 4-hydroxyproline 2-epimerase (308 aa).

The Proton acceptor role is filled by cysteine 88. Residues 89–90, histidine 208, and aspartate 232 each bind substrate; that span reads GH. Cysteine 236 (proton donor) is an active-site residue. 237 to 238 is a substrate binding site; it reads GT.

The protein belongs to the proline racemase family.

It catalyses the reaction trans-4-hydroxy-L-proline = cis-4-hydroxy-D-proline. Functionally, catalyzes the reversible epimerization of cis-4-hydroxy-D-proline (c4DHyp) to trans-4-hydroxy-L-proline (t4LHyp). May be involved in a degradation pathway that allows P.putida strain KT2440 to grow on either epimer of 4-hydroxyproline, c4DHyp and t4LHyp, as the sole carbon and nitrogen source. Does not exhibit measureable racemase activity in vitro with any of the 19 natural chiral amino acid enantiomers. In Pseudomonas putida (strain ATCC 47054 / DSM 6125 / CFBP 8728 / NCIMB 11950 / KT2440), this protein is 4-hydroxyproline 2-epimerase.